Here is a 477-residue protein sequence, read N- to C-terminus: MAASSLWGPAVAGGGESSESEDDGWEIGYLDRAPQKFTAPLPAEEKNEMFKKALTTGDTSLVEELLNAGISVDSSFRYGWTPLMFAASIANVNLVRVLLNRGANASFEKDKQTVLMTACSARGSQEQIIKCVELLLSRNADPNVACRRQMTPIMYAARGGHPQVVALLVAHGAEVNAQDENGYTALTWAAYQGHKNVILKLLELGANKMLQTKDGKTPSEIANRNKHPEIFSLLSLTLNPLEGKIQQLTKEETICKMLATDCDKEKDNLFSSYTAFGELDLFLHGLGLEHMTDLLKERDISLRHLMTMKKDEFLKNGITNKDQQKILSALKELMVEEIKFGELPEVAKLEISGDEFLNFLLKLNKQCGHLITAVQNIITELPVNSHKIVLEWASPRNFTSVCEELVTNVEGLSEEVCRLKDLIQKLQNERESDPTHIPLVEEVSPWKSRLLKRTAVTVCGFGILLGICKLMFQRKLL.

Residues 1–24 (MAASSLWGPAVAGGGESSESEDDG) are disordered. A phosphoserine mark is found at S17, S18, and S20. ANK repeat units follow at residues 45–74 (EKNE…SVDS), 78–107 (YGWT…NASF), 110–144 (DKQT…DPNV), 148–177 (RQMT…EVNA), 181–210 (NGYT…NKML), and 214–243 (DGKT…PLEG). The SAM domain occupies 272 to 334 (SYTAFGELDL…KILSALKELM (63 aa)).

Interacts with DDX4, PIWIL1, RANBP9 and TDRD1.

The protein resides in the cytoplasm. In terms of biological role, plays a central role during spermatogenesis by repressing transposable elements and preventing their mobilization, which is essential for the germline integrity. Acts via the piRNA metabolic process, which mediates the repression of transposable elements during meiosis by forming complexes composed of piRNAs and Piwi proteins and governs the methylation and subsequent repression of transposons. Its association with pi-bodies suggests a participation in the primary piRNAs metabolic process. Required prior to the pachytene stage to facilitate the production of multiple types of piRNAs, including those associated with repeats involved in the regulation of retrotransposons. May act by mediating protein-protein interactions during germ cell maturation. The sequence is that of Ankyrin repeat, SAM and basic leucine zipper domain-containing protein 1 (ASZ1) from Echinops telfairi (Lesser hedgehog tenrec).